A 255-amino-acid polypeptide reads, in one-letter code: Protein SCO2 homolog, mitochondrial (255 aa).

Residues 1-41 (MLLALGPKAWPKLSQFKPLLRISGGETLHRNSRHWAGQGQR) constitute a mitochondrion transit peptide. Over 42–49 (QGPGLRTR) the chain is Mitochondrial matrix. A helical membrane pass occupies residues 50 to 67 (LLITALFGAGLGWAWLAA). Residues 68–255 (RAEKEQWRQQ…HIAAFHSVLP (188 aa)) are Mitochondrial intermembrane-facing. The Thioredoxin domain maps to 74 to 248 (WRQQQRTEAL…IVESIRRHIA (175 aa)). Cysteine 122, cysteine 126, and histidine 213 together coordinate Cu cation. A disulfide bridge links cysteine 122 with cysteine 126.

This sequence belongs to the SCO1/2 family. In terms of assembly, homodimer. Interacts with COA6. Found in a complex with TMEM177, COX20, COA6, MT-CO2/COX2, COX18 and SCO1. Interacts with TMEM177 in a COX20-dependent manner. Interacts with COX20 in a MT-CO2/COX2- and COX18-dependent manner. Interacts with COX16. In terms of tissue distribution, expressed in retina, retinal pigment epithelium, and sclera.

It localises to the mitochondrion inner membrane. Functionally, copper metallochaperone essential for the synthesis and maturation of cytochrome c oxidase subunit II (MT-CO2/COX2) by facilitating the incorporation of copper into the Cu(A) site of MT-CO2/COX2. Could also act as a thiol-disulfide oxidoreductase to regulate the redox state of the cysteines in SCO1 during maturation of MT-CO2/COX2. The chain is Protein SCO2 homolog, mitochondrial (Sco2) from Mus musculus (Mouse).